A 275-amino-acid chain; its full sequence is Pantothenate synthetase (275 aa).

26-33 (MGNLHDGH) lines the ATP pocket. Catalysis depends on H33, which acts as the Proton donor. Q57 serves as a coordination point for (R)-pantoate. Residue Q57 coordinates beta-alanine. 144-147 (GKKD) lines the ATP pocket. A (R)-pantoate-binding site is contributed by Q150. ATP contacts are provided by residues V173 and 181–184 (LSSR).

This sequence belongs to the pantothenate synthetase family. Homodimer.

The protein localises to the cytoplasm. The catalysed reaction is (R)-pantoate + beta-alanine + ATP = (R)-pantothenate + AMP + diphosphate + H(+). It participates in cofactor biosynthesis; (R)-pantothenate biosynthesis; (R)-pantothenate from (R)-pantoate and beta-alanine: step 1/1. Its function is as follows. Catalyzes the condensation of pantoate with beta-alanine in an ATP-dependent reaction via a pantoyl-adenylate intermediate. In Azoarcus sp. (strain BH72), this protein is Pantothenate synthetase.